A 349-amino-acid chain; its full sequence is 3'-5' exoribonuclease 1 (349 aa).

Composition is skewed to basic and acidic residues over residues 1–10 and 22–35; these read MEDPQSKEPA and PRPEGGEEPPRPSP. Residues 1-48 form a disordered region; that stretch reads MEDPQSKEPAGEAVALALLESPRPEGGEEPPRPSPEETQQCKFDGQET. Residues serine 59 and serine 62 each carry the phosphoserine modification. The SAP domain occupies 76-110; it reads INRMSKEELRAKLSEFKLETRGVKDVLKKRLKNYY. The region spanning 130–306 is the Exonuclease domain; the sequence is ICIIDFEATC…DDSKNIARIA (177 aa). Positions 134 and 136 each coordinate Mg(2+). Glutamate 136 (proton acceptor) is an active-site residue. Residues glutamate 136 and alanine 137 each coordinate AMP. Mg(2+) is bound at residue aspartate 234. Histidine 293 serves as the catalytic Proton acceptor. Histidine 293 lines the AMP pocket. Aspartate 298 is a binding site for Mg(2+).

As to quaternary structure, identified in a histone pre-mRNA complex, at least composed of ERI1, LSM11, SLBP, SNRPB, SYNCRIP and YBX1. Interacts in a cooperative manner with SLBP to the mature 3'-end of histone mRNAs. Binds to 40S and 60S ribosomal subunits and to 80S assembled ribosomes. Found in a ternary complex with SLBP and the stem-loop structure of the 3'-end of histone mRNAs. The cofactor is Mg(2+).

The protein resides in the cytoplasm. It localises to the nucleus. The protein localises to the nucleolus. It catalyses the reaction Exonucleolytic cleavage in the 3'- to 5'-direction to yield nucleoside 5'-phosphates.. With respect to regulation, although it can bind simultaneously with SLBP to the 3'-end of histone mRNA, the presence of SLBP prevents the exonuclease activity. RNA exonuclease that binds to the 3'-end of histone mRNAs and degrades them, suggesting that it plays an essential role in histone mRNA decay after replication. A 2' and 3'-hydroxyl groups at the last nucleotide of the histone 3'-end is required for efficient 3'-end histone mRNA exonuclease activity and degradation of RNA substrates. Also able to degrade the 3'-overhangs of short interfering RNAs (siRNAs) in vitro, suggesting a possible role as regulator of RNA interference (RNAi). Required for binding the 5'-ACCCA-3' sequence present in stem-loop structure. Able to bind other mRNAs. Required for 5.8S rRNA 3'-end processing. Also binds to 5.8s ribosomal RNA. Binds with high affinity to the stem-loop structure of replication-dependent histone pre-mRNAs. In vitro, does not have sequence specificity. In vitro, has weak DNA exonuclease activity. In vitro, shows biphasic kinetics such that there is rapid hydrolysis of the last three unpaired RNA nucleotides in the 39 flanking sequence followed by a much slower cleavage through the stem that occurs over a longer incubation period in the order of hours. ERI1-mediated RNA metabolism plays a key role in chondrogenesis. The polypeptide is 3'-5' exoribonuclease 1 (Homo sapiens (Human)).